Reading from the N-terminus, the 537-residue chain is Endoprotease aex-5 (537 aa).

The signal sequence occupies residues 1–17 (MKLIFLLLLFGVSPIVC). The propeptide occupies 18–99 (QDFEDGVFLA…KLQGFRRYKR (82 aa)). Residues 111-413 (VWNLTPSLYI…FGLLNAQKLV (303 aa)) form the Peptidase S8 domain. An N-linked (GlcNAc...) asparagine glycan is attached at Asn-129. Catalysis depends on charge relay system residues Asp-139 and His-178. Cys-286 and Cys-316 are joined by a disulfide. The Charge relay system role is filled by Ser-346. A glycan (N-linked (GlcNAc...) asparagine) is linked at Asn-380. The region spanning 407–537 (LNAQKLVVMA…KMFKVVGTMS (131 aa)) is the P/Homo B domain.

It belongs to the peptidase S8 family. Furin subfamily.

The protein localises to the secreted. Probable serine endoprotease which cleaves preproteins at paired basic amino acids. May process FMRFamide-like (flp) and neuropeptide-like protein (nlp) neuropeptides. In muscles, involved in neuronal retrograde signaling by regulating presynaptic activity and localization of synaptic vesicle fusion protein unc-13 at the neuromuscular junction (NMJ). Acts in the intestine to regulate anterior body muscle contractions (aBOC) and the expulsion steps during the defecation motor program (DMP). Probably by regulating DMP, required for fatty acid uptake by intestinal cells and therefore regulates the levels of triglycerides in the intestine. Plays a role in locomotion. The polypeptide is Endoprotease aex-5 (Caenorhabditis elegans).